A 339-amino-acid polypeptide reads, in one-letter code: Phenylalanine--tRNA ligase alpha subunit (339 aa).

E254 lines the Mg(2+) pocket.

Belongs to the class-II aminoacyl-tRNA synthetase family. Phe-tRNA synthetase alpha subunit type 1 subfamily. In terms of assembly, tetramer of two alpha and two beta subunits. Mg(2+) serves as cofactor.

It localises to the cytoplasm. It catalyses the reaction tRNA(Phe) + L-phenylalanine + ATP = L-phenylalanyl-tRNA(Phe) + AMP + diphosphate + H(+). The polypeptide is Phenylalanine--tRNA ligase alpha subunit (Lachnoclostridium phytofermentans (strain ATCC 700394 / DSM 18823 / ISDg) (Clostridium phytofermentans)).